The chain runs to 493 residues: MLQTLFLTMLTLALVKSQYTEETITYTQCTDGYEWDPIRQQCKDIDECDIVPDACKGGMKCVNHYGGYLCLPKTAQIIVNNEHPQQETPAAEASSGATTGTVAARSMATSGVVPGGGFMASATAVAGPEVQTGRNNFVIRRNPADPQRIPSNPSHRIQCAAGYEQSEHNVCQDIDECTSGTHNCRTDQVCINLRGSFTCQCLPGYQKRGEQCVDIDECTVPPYCHQRCVNTPGSFYCQCSPGFQLAANNYTCVDINECDASNQCAQQCYNILGSFICQCNQGYELSSDRLNCEDIDECRTSSYLCQYQCVNEPGKFSCMCPQGYEVVRSRTCQDINECETTNECREDEMCWNYHGGFRCYPRNPCQDHYVLTSENRCVCPVSNTMCRELPQSIVYKYMSIRSDRSVPSDIFQIQATMIYANTINTFRIKSGNENGEFYLRQTSPVSAMLVLVKSLSGPREYIVDLEMLTVSSIGTFRTSSVLRLTIIVGPFSF.

The signal sequence occupies residues 1 to 17 (MLQTLFLTMLTLALVKS). One can recognise an EGF-like 1; atypical domain in the interval 26 to 71 (YTQCTDGYEWDPIRQQCKDIDECDIVPDACKGGMKCVNHYGGYLCL). The region spanning 173-213 (DIDECTSGTHNCRTDQVCINLRGSFTCQCLPGYQKRGEQCV) is the EGF-like 2; calcium-binding domain. Intrachain disulfides connect Cys177–Cys190, Cys184–Cys199, Cys201–Cys212, Cys218–Cys228, Cys224–Cys237, Cys239–Cys252, Cys258–Cys268, Cys264–Cys277, Cys279–Cys292, Cys298–Cys309, Cys305–Cys318, Cys320–Cys332, Cys338–Cys350, Cys344–Cys359, and Cys365–Cys377. The EGF-like 3; calcium-binding domain occupies 214 to 253 (DIDECTVPPYCHQRCVNTPGSFYCQCSPGFQLAANNYTCV). N-linked (GlcNAc...) asparagine glycosylation occurs at Asn249. In terms of domain architecture, EGF-like 4; calcium-binding spans 254 to 293 (DINECDASNQCAQQCYNILGSFICQCNQGYELSSDRLNCE). The mediates interaction with TIMP3 stretch occupies residues 259–493 (DASNQCAQQC…LTIIVGPFSF (235 aa)). Residues 294 to 333 (DIDECRTSSYLCQYQCVNEPGKFSCMCPQGYEVVRSRTCQ) enclose the EGF-like 5; calcium-binding domain. One can recognise an EGF-like 6; calcium-binding domain in the interval 334–378 (DINECETTNECREDEMCWNYHGGFRCYPRNPCQDHYVLTSENRCV).

The protein belongs to the fibulin family. Interacts with ECM1. Interacts with TIMP3. As to expression, expressed in the eye in the ciliary body, cornea, inner nuclear layer of the retina, and in the optic disk.

The protein resides in the secreted. It is found in the extracellular space. It localises to the extracellular matrix. Functionally, binds EGFR, the EGF receptor, inducing EGFR autophosphorylation and the activation of downstream signaling pathways. May play a role in cell adhesion and migration. May function as a negative regulator of chondrocyte differentiation. In the olfactory epithelium, it may regulate glial cell migration, differentiation and the ability of glial cells to support neuronal neurite outgrowth. The protein is EGF-containing fibulin-like extracellular matrix protein 1 (Efemp1) of Mus musculus (Mouse).